We begin with the raw amino-acid sequence, 227 residues long: Cytochrome c oxidase subunit 2 (227 aa).

Topologically, residues 1-14 are mitochondrial intermembrane; that stretch reads MPYPLQLGFQDATS. A helical transmembrane segment spans residues 15-45; sequence PIMEELLHFHDHTLMIVFLISSLVLYIITLM. At 46–59 the chain is on the mitochondrial matrix side; the sequence is LTTKLTHTSTMDAQ. The chain crosses the membrane as a helical span at residues 60-87; the sequence is EVETVWTILPAVILILIALPSLRILYMM. Topologically, residues 88-227 are mitochondrial intermembrane; sequence DEINNPLLTI…HFEDWSTSML (140 aa). Cu cation contacts are provided by histidine 161, cysteine 196, glutamate 198, cysteine 200, histidine 204, and methionine 207. Glutamate 198 serves as a coordination point for Mg(2+).

Belongs to the cytochrome c oxidase subunit 2 family. In terms of assembly, component of the cytochrome c oxidase (complex IV, CIV), a multisubunit enzyme composed of 14 subunits. The complex is composed of a catalytic core of 3 subunits MT-CO1, MT-CO2 and MT-CO3, encoded in the mitochondrial DNA, and 11 supernumerary subunits COX4I, COX5A, COX5B, COX6A, COX6B, COX6C, COX7A, COX7B, COX7C, COX8 and NDUFA4, which are encoded in the nuclear genome. The complex exists as a monomer or a dimer and forms supercomplexes (SCs) in the inner mitochondrial membrane with NADH-ubiquinone oxidoreductase (complex I, CI) and ubiquinol-cytochrome c oxidoreductase (cytochrome b-c1 complex, complex III, CIII), resulting in different assemblies (supercomplex SCI(1)III(2)IV(1) and megacomplex MCI(2)III(2)IV(2)). Found in a complex with TMEM177, COA6, COX18, COX20, SCO1 and SCO2. Interacts with TMEM177 in a COX20-dependent manner. Interacts with COX20. Interacts with COX16. The cofactor is Cu cation.

The protein localises to the mitochondrion inner membrane. The catalysed reaction is 4 Fe(II)-[cytochrome c] + O2 + 8 H(+)(in) = 4 Fe(III)-[cytochrome c] + 2 H2O + 4 H(+)(out). Its function is as follows. Component of the cytochrome c oxidase, the last enzyme in the mitochondrial electron transport chain which drives oxidative phosphorylation. The respiratory chain contains 3 multisubunit complexes succinate dehydrogenase (complex II, CII), ubiquinol-cytochrome c oxidoreductase (cytochrome b-c1 complex, complex III, CIII) and cytochrome c oxidase (complex IV, CIV), that cooperate to transfer electrons derived from NADH and succinate to molecular oxygen, creating an electrochemical gradient over the inner membrane that drives transmembrane transport and the ATP synthase. Cytochrome c oxidase is the component of the respiratory chain that catalyzes the reduction of oxygen to water. Electrons originating from reduced cytochrome c in the intermembrane space (IMS) are transferred via the dinuclear copper A center (CU(A)) of subunit 2 and heme A of subunit 1 to the active site in subunit 1, a binuclear center (BNC) formed by heme A3 and copper B (CU(B)). The BNC reduces molecular oxygen to 2 water molecules using 4 electrons from cytochrome c in the IMS and 4 protons from the mitochondrial matrix. This chain is Cytochrome c oxidase subunit 2 (MT-CO2), found in Dasypus novemcinctus (Nine-banded armadillo).